The sequence spans 589 residues: Muscarinic acetylcholine receptor M3 (589 aa).

Residues 1-66 (MTLHSNSTTS…DPLGGHTIWQ (66 aa)) are Extracellular-facing. 5 N-linked (GlcNAc...) asparagine glycosylation sites follow: Asn6, Asn15, Asn41, Asn48, and Asn52. Residues 67-90 (VVFIAFLTGFLALVTIIGNILVIV) traverse the membrane as a helical segment. Over 91 to 103 (AFKVNKQLKTVNN) the chain is Cytoplasmic. The helical transmembrane segment at 104–129 (YFLLSLACADLIIGVISMNLFTTYII) threads the bilayer. Over 130–141 (MNRWALGNLACD) the chain is Extracellular. Cys140 and Cys220 are joined by a disulfide. The helical transmembrane segment at 142–163 (LWLSIDYVASNASVMNLLVISF) threads the bilayer. At 164–183 (DRYFSITRPLTYRAKRTTKR) the chain is on the cytoplasmic side. The chain crosses the membrane as a helical span at residues 184–205 (AGVMIGLAWVISFVLWAPAILF). Over 206 to 228 (WQYFVGKRTVPPGECFIQFLSEP) the chain is Extracellular. A helical transmembrane segment spans residues 229-251 (TITFGTAIAAFYMPVTIMTILYW). Residues 252–490 (RIYKETEKRT…SLIKEKKAAQ (239 aa)) are Cytoplasmic-facing. Positions 274 to 280 (AEAENFV) match the Basolateral sorting signal motif. Disordered stretches follow at residues 275 to 295 (EAENFVHPTGSSRSCSSYELQ) and 323 to 356 (AEQMDQDHSSSDSWNNNDAAASLENSASSDEEDI). The segment covering 283–295 (TGSSRSCSSYELQ) has biased composition (polar residues). Over residues 333 to 344 (SDSWNNNDAAAS) the composition is skewed to low complexity. A Phosphoserine modification is found at Ser384. A helical transmembrane segment spans residues 491-513 (TLSAILLAFIITWTPYNIMVLVN). Topologically, residues 514–525 (TFCDSCIPKTYW) are extracellular. A disulfide bridge links Cys516 with Cys519. A helical transmembrane segment spans residues 526-545 (NLGYWLCYINSTVNPVCYAL). Residues 546-589 (CNKTFRTTFKMLLLCQCDKRKRRKQQYQQRQSVIFHKRVPEQAL) lie on the Cytoplasmic side of the membrane.

Belongs to the G-protein coupled receptor 1 family. Muscarinic acetylcholine receptor subfamily. CHRM3 sub-subfamily. Homodimer; the dimers can form tetramers. Interacts with NALCN. Interacts with TMEM147. In terms of tissue distribution, expressed in cerebral cortex, submandibular gland, hypothalamus, pancreas, liver, and ileum.

The protein localises to the cell membrane. Its subcellular location is the postsynaptic cell membrane. It is found in the basolateral cell membrane. The protein resides in the endoplasmic reticulum membrane. In terms of biological role, the muscarinic acetylcholine receptor mediates various cellular responses, including inhibition of adenylate cyclase, breakdown of phosphoinositides and modulation of potassium channels through the action of G proteins. Primary transducing effect is Pi turnover. The sequence is that of Muscarinic acetylcholine receptor M3 (Chrm3) from Mus musculus (Mouse).